Reading from the N-terminus, the 303-residue chain is Acetaldehyde dehydrogenase 1 (303 aa).

C130 functions as the Acyl-thioester intermediate in the catalytic mechanism. NAD(+) contacts are provided by residues 161 to 169 (SVGPGTRKN) and N272.

This sequence belongs to the acetaldehyde dehydrogenase family.

It catalyses the reaction acetaldehyde + NAD(+) + CoA = acetyl-CoA + NADH + H(+). This chain is Acetaldehyde dehydrogenase 1, found in Methylibium petroleiphilum (strain ATCC BAA-1232 / LMG 22953 / PM1).